A 295-amino-acid polypeptide reads, in one-letter code: Glutamate-binding protein GluB (295 aa).

A signal peptide spans 1-26; the sequence is MSAKRTFTRIGAILGATALAGVTLTA. Cys-27 carries the N-palmitoyl cysteine lipid modification. Cys-27 is lipidated: S-diacylglycerol cysteine.

This sequence belongs to the bacterial solute-binding protein 3 family. As to quaternary structure, the complex is composed of two ATP-binding proteins (GluA), two transmembrane proteins (GluC and GluD) and a solute-binding protein (GluB).

It is found in the cell membrane. Its activity is regulated as follows. Binding of glutamate or asparatate induces a higher thermal stability of the protein structure. In terms of biological role, part of the ABC transporter complex GluABCD involved in glutamate uptake. Binds glutamate with a high affinity. Also binds aspartate with high affinity, suggesting that GluB could be involved in the transport of both amino acid residues into the cell. This Corynebacterium glutamicum (strain ATCC 13032 / DSM 20300 / JCM 1318 / BCRC 11384 / CCUG 27702 / LMG 3730 / NBRC 12168 / NCIMB 10025 / NRRL B-2784 / 534) protein is Glutamate-binding protein GluB.